We begin with the raw amino-acid sequence, 388 residues long: Putative 8-amino-7-oxononanoate synthase (388 aa).

Arginine 18 serves as a coordination point for substrate. Position 105–106 (105–106 (GY)) interacts with pyridoxal 5'-phosphate. Histidine 130 lines the substrate pocket. Pyridoxal 5'-phosphate-binding positions include serine 176, 201 to 204 (DDAH), and 232 to 235 (TLSK). The residue at position 235 (lysine 235) is an N6-(pyridoxal phosphate)lysine. Threonine 349 provides a ligand contact to substrate.

It belongs to the class-II pyridoxal-phosphate-dependent aminotransferase family. BioF subfamily. Homodimer. Pyridoxal 5'-phosphate serves as cofactor.

The enzyme catalyses 6-carboxyhexanoyl-[ACP] + L-alanine + H(+) = (8S)-8-amino-7-oxononanoate + holo-[ACP] + CO2. Its pathway is cofactor biosynthesis; biotin biosynthesis. Catalyzes the decarboxylative condensation of pimeloyl-[acyl-carrier protein] and L-alanine to produce 8-amino-7-oxononanoate (AON), [acyl-carrier protein], and carbon dioxide. The protein is Putative 8-amino-7-oxononanoate synthase (bioF) of Acetivibrio thermocellus (strain ATCC 27405 / DSM 1237 / JCM 9322 / NBRC 103400 / NCIMB 10682 / NRRL B-4536 / VPI 7372) (Clostridium thermocellum).